Reading from the N-terminus, the 395-residue chain is GDP-mannose 4,6 dehydratase (395 aa).

Composition is skewed to polar residues over residues Met-1 to Asp-13 and Glu-24 to Thr-36. Residues Met-1–Ser-44 are disordered. Residues Gly-53–Asp-58, Asp-109–Met-110, Leu-131–Ser-135, and Tyr-146 contribute to the NADP(+) site. Residue Thr-178 is part of the active site. Catalysis depends on nucleophile residues Glu-180 and Tyr-202. Lys-206, His-232, and Arg-237 together coordinate NADP(+).

It belongs to the NAD(P)-dependent epimerase/dehydratase family. GDP-mannose 4,6-dehydratase subfamily. NADP(+) serves as cofactor.

The enzyme catalyses GDP-alpha-D-mannose = GDP-4-dehydro-alpha-D-rhamnose + H2O. Its pathway is nucleotide-sugar biosynthesis; GDP-L-fucose biosynthesis via de novo pathway; GDP-L-fucose from GDP-alpha-D-mannose: step 1/2. Its function is as follows. Catalyzes the conversion of GDP-D-mannose to GDP-4-dehydro-6-deoxy-D-mannose (also known as GDP-4-keto-6-deoxy-D-mannose or GDP-4-dehydro-alpha-D-rhamnose), an essential step in the synthesis of GDP-fucose from GDP-mannose. This Drosophila melanogaster (Fruit fly) protein is GDP-mannose 4,6 dehydratase (Gmd).